The chain runs to 323 residues: DNA-directed RNA polymerase subunit alpha (323 aa).

Residues 1 to 233 (MGQEKVTVST…DLFIPFFHAE (233 aa)) are alpha N-terminal domain (alpha-NTD). An alpha C-terminal domain (alpha-CTD) region spans residues 264–323 (IALKYIYIDQSELPPRVYNCLKRSNINTFLELLNNSQEELMKIQDFRIEDVKHILDVLEI).

This sequence belongs to the RNA polymerase alpha chain family. In plastids the minimal PEP RNA polymerase catalytic core is composed of four subunits: alpha, beta, beta', and beta''. When a (nuclear-encoded) sigma factor is associated with the core the holoenzyme is formed, which can initiate transcription.

Its subcellular location is the plastid. It localises to the chloroplast. It catalyses the reaction RNA(n) + a ribonucleoside 5'-triphosphate = RNA(n+1) + diphosphate. DNA-dependent RNA polymerase catalyzes the transcription of DNA into RNA using the four ribonucleoside triphosphates as substrates. The chain is DNA-directed RNA polymerase subunit alpha from Morus indica (Mulberry).